The chain runs to 631 residues: MRYSSYEMKKNRFTYGLALGALGVVFGDIGTSPLYALKVTLSGIPINQFNILGVLSLIFWSLIIVVSFKYLMIIFRADNDGEGGILALLALMKHKSTKYQPLFYIVAIFGAGLLLGDGMLTPAISVVSAVEGLGTLSDKLYPYVLPIASVILVLLFSLQAKGTARIGYLFGPLILIWFITIAILGILQIVEHPVVLQAINPYYAIAFLVDEGLRGYFLLGGIFLVVTGGEALFADIGHFGKNPIRFSWFFIALPCLLLNYFGQGANLIVRPEEISNPFFMIAPPWFYLPLIIIATVATVIASQAVISATFSLTKQAVLLGLCPKIPIVQTSMLHSGQIYVPQINFILFIGTMAFCLAFKTSDNLAHAYGIAVNLEMLLVDAMVAYAAVSIWRWSTFNVIFLFGLFLLIDLAFLGANTHKFITGGWVPIVLAFVIAFIMYSWRYGLEYLRDNFYMNKEDISKILKQLQYKSLNQLPGVSAIFITDVYDKSGGSFLHFLKLNRSVPENVLIVNYIVDNIPYVHYSQRYEIVCLDEKVCKLVIHYGFMETINIPRSLEKACNKNILPFKFNVDTATFMVEIPNIMASKEKRSLSFYWQEKLFAFLMRNYSANLNIEFYKLPYNRTIAIGTYCIL.

Transmembrane regions (helical) follow at residues 17 to 37, 55 to 75, 101 to 121, 140 to 160, 166 to 186, 217 to 237, 249 to 269, 277 to 297, 338 to 358, 370 to 390, 395 to 415, and 420 to 440; these read LALGALGVVFGDIGTSPLYAL, LSLIFWSLIIVVSFKYLMIIF, PLFYIVAIFGAGLLLGDGMLT, LYPYVLPIASVILVLLFSLQA, IGYLFGPLILIWFITIAILGI, FLLGGIFLVVTGGEALFADIG, FFIALPCLLLNYFGQGANLIV, PFFMIAPPWFYLPLIIIATVA, IYVPQINFILFIGTMAFCLAF, IAVNLEMLLVDAMVAYAAVSI, TFNVIFLFGLFLLIDLAFLGA, and FITGGWVPIVLAFVIAFIMYS.

Belongs to the HAK/KUP transporter (TC 2.A.72) family.

Its subcellular location is the cell inner membrane. The catalysed reaction is K(+)(in) + H(+)(in) = K(+)(out) + H(+)(out). Transport of potassium into the cell. Likely operates as a K(+):H(+) symporter. The protein is Probable potassium transport system protein Kup 1 of Legionella pneumophila (strain Corby).